A 65-amino-acid polypeptide reads, in one-letter code: MPKMKTKKSASKRFTARPNGSFKRGQAFKRHILTKKTTKNKRQLRGTQDVHETNLKSVRAMMPYA.

Composition is skewed to basic residues over residues Met1–Thr15 and Gln26–Leu44. A disordered region spans residues Met1–Ala65.

This sequence belongs to the bacterial ribosomal protein bL35 family.

The chain is Large ribosomal subunit protein bL35 from Cupriavidus metallidurans (strain ATCC 43123 / DSM 2839 / NBRC 102507 / CH34) (Ralstonia metallidurans).